The primary structure comprises 196 residues: MALVPIVVEQTSKGERSYDIYSRLLKERIIFLTGQVEDHMANLIVAQMLFLEAEDPEKDIYLYINSPGGVVTAGLAIYDTMNFIKPDVATLCTGQACSMGAFLLSGGAKGKRFALPNARVMIHQPLGGARGQATDIQIQAQEILKLKEMLTRKMAEHSGQPFEKVAADTERDNFMSAVEAMEYGLIDKVLTHRDIK.

The active-site Nucleophile is the serine 98. Histidine 123 is an active-site residue.

The protein belongs to the peptidase S14 family. In terms of assembly, fourteen ClpP subunits assemble into 2 heptameric rings which stack back to back to give a disk-like structure with a central cavity, resembling the structure of eukaryotic proteasomes.

Its subcellular location is the cytoplasm. It carries out the reaction Hydrolysis of proteins to small peptides in the presence of ATP and magnesium. alpha-casein is the usual test substrate. In the absence of ATP, only oligopeptides shorter than five residues are hydrolyzed (such as succinyl-Leu-Tyr-|-NHMec, and Leu-Tyr-Leu-|-Tyr-Trp, in which cleavage of the -Tyr-|-Leu- and -Tyr-|-Trp bonds also occurs).. Cleaves peptides in various proteins in a process that requires ATP hydrolysis. Has a chymotrypsin-like activity. Plays a major role in the degradation of misfolded proteins. In Actinobacillus pleuropneumoniae serotype 7 (strain AP76), this protein is ATP-dependent Clp protease proteolytic subunit.